The sequence spans 303 residues: Coenzyme PQQ synthesis protein B (303 aa).

The protein belongs to the PqqB family.

Its pathway is cofactor biosynthesis; pyrroloquinoline quinone biosynthesis. May be involved in the transport of PQQ or its precursor to the periplasm. The protein is Coenzyme PQQ synthesis protein B of Pseudomonas putida (strain ATCC 700007 / DSM 6899 / JCM 31910 / BCRC 17059 / LMG 24140 / F1).